A 122-amino-acid chain; its full sequence is Large ribosomal subunit protein uL18 (122 aa).

The interval 1-24 (MLKKADKNANRLQRHKRVRRKISG) is disordered. Residues 12-22 (LQRHKRVRRKI) are compositionally biased toward basic residues.

The protein belongs to the universal ribosomal protein uL18 family. As to quaternary structure, part of the 50S ribosomal subunit; part of the 5S rRNA/L5/L18/L25 subcomplex. Contacts the 5S and 23S rRNAs.

In terms of biological role, this is one of the proteins that bind and probably mediate the attachment of the 5S RNA into the large ribosomal subunit, where it forms part of the central protuberance. This Clostridioides difficile (strain 630) (Peptoclostridium difficile) protein is Large ribosomal subunit protein uL18.